Here is a 294-residue protein sequence, read N- to C-terminus: Early 4 ORF6 protein (294 aa).

The Nuclear localization signal signature appears at 239-255 (ARRTRRLMLRAVRIIAE).

It belongs to the adenoviridae E4 30 to 34 kDa protein family. As to quaternary structure, interacts with E1B-55k.

It is found in the host nucleus. Its subcellular location is the host cytoplasm. In terms of biological role, plays a major role to prevent cellular inhibition of viral genome replication by nuclear bodies. Assembles an SCF-like E3 ubiquitin ligase complex based on the cellular proteins ELOB, ELOC, CUL5 and RBX1, in cooperation with viral E1B-55K. This viral RING-type ligase ubiquitinates cellular substrates prior to proteasomal degradation: p53/TP53, LIG4, MRE11-RAD50-NBS1 (MRN) complex, ITGA3, DAXX and BLM. This is Early 4 ORF6 protein from Homo sapiens (Human).